The chain runs to 201 residues: Imidazoleglycerol-phosphate dehydratase (201 aa).

It belongs to the imidazoleglycerol-phosphate dehydratase family.

It localises to the cytoplasm. The enzyme catalyses D-erythro-1-(imidazol-4-yl)glycerol 3-phosphate = 3-(imidazol-4-yl)-2-oxopropyl phosphate + H2O. The protein operates within amino-acid biosynthesis; L-histidine biosynthesis; L-histidine from 5-phospho-alpha-D-ribose 1-diphosphate: step 6/9. The polypeptide is Imidazoleglycerol-phosphate dehydratase (Prochlorococcus marinus subsp. pastoris (strain CCMP1986 / NIES-2087 / MED4)).